Here is a 347-residue protein sequence, read N- to C-terminus: S-adenosylmethionine:tRNA ribosyltransferase-isomerase (347 aa).

It belongs to the QueA family. Monomer.

It localises to the cytoplasm. It carries out the reaction 7-aminomethyl-7-carbaguanosine(34) in tRNA + S-adenosyl-L-methionine = epoxyqueuosine(34) in tRNA + adenine + L-methionine + 2 H(+). The protein operates within tRNA modification; tRNA-queuosine biosynthesis. Functionally, transfers and isomerizes the ribose moiety from AdoMet to the 7-aminomethyl group of 7-deazaguanine (preQ1-tRNA) to give epoxyqueuosine (oQ-tRNA). In Streptococcus thermophilus (strain CNRZ 1066), this protein is S-adenosylmethionine:tRNA ribosyltransferase-isomerase.